The primary structure comprises 90 residues: Small ribosomal subunit protein bS16 (90 aa).

The protein belongs to the bacterial ribosomal protein bS16 family.

This is Small ribosomal subunit protein bS16 from Moorella thermoacetica (strain ATCC 39073 / JCM 9320).